A 600-amino-acid polypeptide reads, in one-letter code: Proton channel OTOP1 (600 aa).

The segment at 1 to 50 (MPGGPGAPSSPAASSGSSRAAPSGIAACPLSPPPLARGSPQASGPRRGAS) is disordered. Residues 1-56 (MPGGPGAPSSPAASSGSSRAAPSGIAACPLSPPPLARGSPQASGPRRGASVPQKLA) are Cytoplasmic-facing. Low complexity predominate over residues 7–27 (APSSPAASSGSSRAAPSGIAA). The chain crosses the membrane as a helical span at residues 57–78 (ETLSSQYGLNVFVAGLLFLLAW). Topologically, residues 79–86 (AVHATGVG) are extracellular. The helical transmembrane segment at 87–110 (KSDLLCVLTALMLLQLLWMLWYVG) threads the bilayer. Topologically, residues 111–128 (RSYMQRRLIRPKDTHAGA) are cytoplasmic. Residues 129-151 (RWLRGSITLFAFITVVLGCLKVA) form a helical membrane-spanning segment. The Extracellular portion of the chain corresponds to 152 to 161 (YFIGFSECLS). The chain crosses the membrane as a helical span at residues 162–186 (ATEGVFPVTHAVHTLLQVYFLWGHA). The Cytoplasmic segment spans residues 187-194 (KDIIMSFK). The chain crosses the membrane as a helical span at residues 195–217 (TLERFGVIHSVFTNLLLWANSVL). At 218-262 (NESKHQLNEHKERLITLGFGNITIVLDDHTPQCNCTPPALCSALS) the chain is on the extracellular side. A helical transmembrane segment spans residues 263–288 (HGIYYLYPFNIEYQILASTMLYVLWK). The Cytoplasmic segment spans residues 289–309 (NIGRRVDSSQHQKMQCRFDGV). A helical transmembrane segment spans residues 310 to 332 (LVGSVLGLTVLAATIAVVVVYMI). Topologically, residues 333 to 342 (HIGRSKSKSE) are extracellular. The helical transmembrane segment at 343 to 368 (SALIMFYLYAITVLLLMGAAGLVGSW) threads the bilayer. The Cytoplasmic segment spans residues 369 to 386 (IYRVDEKSLDESKNPARK). Residues 387 to 411 (LDVDLLVATGSGSWLLSWGSILAIA) form a helical membrane-spanning segment. The Extracellular segment spans residues 412–421 (CAETRPPYTW). The chain crosses the membrane as a helical span at residues 422–442 (YNLPYSVLVIVEKYVQNIFII). At 443-532 (ESVHLEPEGV…QGGMKRRLLR (90 aa)) the chain is on the cytoplasmic side. Residues 533–551 (NITAFLFLCNISLWIPPAF) traverse the membrane as a helical segment. Residues 552 to 569 (GCRPEYDNGLEEIVFGFE) lie on the Extracellular side of the membrane. Residues 570–593 (PWIIVVNLAMPFSIFYRMHAAAAL) form a helical membrane-spanning segment. The Cytoplasmic portion of the chain corresponds to 594–600 (FEVYCKI).

Belongs to the otopetrin family. As to quaternary structure, homodimer. Interacts with STAT1, independently of STAT1 phosphorylation status. As to expression, expressed in thymus, heart, kidney, skin, vestibular system of the inner ear, sour taste cells, heart, uterus, dorsal root ganglion, adrenal gland, lactating mammary gland and stimulated mast cells. In the inner ear, expressed in the supporting cells in extrastriolar regions of the saccule and in the utricle, but not in the cochlea. Expressed in brown adipose tissue. Expressed in epididymal white adipose tissue (eWAT), as well as in inguinal fat, in obese animals, but hardly detectable in eWAT from lean mice. Expressed in acid-sensing taste receptor cells (PKD2L1-positive cells), but not in other types of taste cells (at protein level).

Its subcellular location is the cell membrane. It is found in the cell projection. It localises to the microvillus. The enzyme catalyses H(+)(in) = H(+)(out). Activated by both acid and alkali, with proton influx in response to extracellular acid and proton efflux during alkali stimulation. Inhibited by Zn(2+); this inhibition is thought to be pH-sensitive. Currents evoked in response to mild acid (pH 6.0) stimulus may also be mildly potentiated by exposure to Zn(2+). Activated by NH(4)Cl. Its function is as follows. Proton-selective ion channel. Biphasically modulated by acid and alkali, mediating proton influx and efflux in response to extracellular acid and base stimulation, respectively. Sour taste receptor, which carries inward currents in response to extracellular acidification. Sensor for ammonium chloride (NH(4)Cl) in taste receptor cells. NH(4)Cl acts by increasing the intracellular pH, thereby generating a driving force for proton entry through OTOP1 channel. Might also participate in alkaline sensation. Plays a role in the regulation of Ca(2+) flux in response to purigenic (ATP, ADP and UDP) stimuli, leading to increase in cytosolic Ca(2+) due to influx of extracellular calcium. May play this role by inhibiting P2Y purinoceptor-mediated Ca(2+) release in a Ca(2+)-dependent manner and promote an influx of Ca(2+) in response to ATP. Through this mechanism and possibly others, plays a role in the formation and function of calcium carbonate-based structures in the vestibular system of the inner ear, called otoconia, that sense gravity and linear acceleration. In obesity, may attenuate adipose tissue inflammation, through the negative regulation of IFNG signaling, hence may play an adaptive role in the maintainance of metabolic homeostasis. Following alkali activation, may also be permeable Na(+), K(+), Cs(+) and Li(+). The chain is Proton channel OTOP1 from Mus musculus (Mouse).